Reading from the N-terminus, the 504-residue chain is ATP synthase subunit alpha (504 aa).

169–176 (GDRGTGKT) contributes to the ATP binding site.

The protein belongs to the ATPase alpha/beta chains family. As to quaternary structure, F-type ATPases have 2 components, CF(1) - the catalytic core - and CF(0) - the membrane proton channel. CF(1) has five subunits: alpha(3), beta(3), gamma(1), delta(1), epsilon(1). CF(0) has three main subunits: a(1), b(2) and c(9-12). The alpha and beta chains form an alternating ring which encloses part of the gamma chain. CF(1) is attached to CF(0) by a central stalk formed by the gamma and epsilon chains, while a peripheral stalk is formed by the delta and b chains.

The protein resides in the cell inner membrane. The enzyme catalyses ATP + H2O + 4 H(+)(in) = ADP + phosphate + 5 H(+)(out). Functionally, produces ATP from ADP in the presence of a proton gradient across the membrane. The alpha chain is a regulatory subunit. This Leptospira biflexa serovar Patoc (strain Patoc 1 / Ames) protein is ATP synthase subunit alpha.